A 59-amino-acid chain; its full sequence is Large ribosomal subunit protein bL32 (59 aa).

The interval 1–28 (MAVQQNKKSPSKRGMHRAHDFLTDPPLA) is disordered.

Belongs to the bacterial ribosomal protein bL32 family.

The protein is Large ribosomal subunit protein bL32 of Aromatoleum aromaticum (strain DSM 19018 / LMG 30748 / EbN1) (Azoarcus sp. (strain EbN1)).